A 202-amino-acid polypeptide reads, in one-letter code: Imidazole glycerol phosphate synthase subunit HisH (202 aa).

The Glutamine amidotransferase type-1 domain maps to 3 to 202 (RIVILDYGLG…KILKNFVDMC (200 aa)). Cys79 serves as the catalytic Nucleophile. Active-site residues include His183 and Glu185.

Heterodimer of HisH and HisF.

The protein localises to the cytoplasm. The enzyme catalyses 5-[(5-phospho-1-deoxy-D-ribulos-1-ylimino)methylamino]-1-(5-phospho-beta-D-ribosyl)imidazole-4-carboxamide + L-glutamine = D-erythro-1-(imidazol-4-yl)glycerol 3-phosphate + 5-amino-1-(5-phospho-beta-D-ribosyl)imidazole-4-carboxamide + L-glutamate + H(+). The catalysed reaction is L-glutamine + H2O = L-glutamate + NH4(+). It participates in amino-acid biosynthesis; L-histidine biosynthesis; L-histidine from 5-phospho-alpha-D-ribose 1-diphosphate: step 5/9. IGPS catalyzes the conversion of PRFAR and glutamine to IGP, AICAR and glutamate. The HisH subunit catalyzes the hydrolysis of glutamine to glutamate and ammonia as part of the synthesis of IGP and AICAR. The resulting ammonia molecule is channeled to the active site of HisF. The polypeptide is Imidazole glycerol phosphate synthase subunit HisH (Methanosarcina barkeri (strain Fusaro / DSM 804)).